A 464-amino-acid polypeptide reads, in one-letter code: L-cystine uptake protein TcyP (464 aa).

10 helical membrane passes run Thr3–Met23, Val34–Pro54, Tyr73–Phe93, Gly107–Ala127, Pro184–Val204, Ile225–Met245, Phe263–Ala283, Ala347–Leu367, Phe371–Gly391, and Phe395–Ile415.

The protein belongs to the dicarboxylate/amino acid:cation symporter (DAACS) (TC 2.A.23) family.

It localises to the membrane. Its function is as follows. Mediates uptake of L-cystine, the oxidized form of L-cysteine. The sequence is that of L-cystine uptake protein TcyP from Bacillus thuringiensis subsp. konkukian (strain 97-27).